The primary structure comprises 464 residues: Glutamate--tRNA ligase (464 aa).

A 'HIGH' region motif is present at residues Pro-11–Gly-21. The 'KMSKS' region signature appears at Lys-253 to Arg-257. Residue Lys-256 participates in ATP binding.

Belongs to the class-I aminoacyl-tRNA synthetase family. Glutamate--tRNA ligase type 1 subfamily. Monomer.

It is found in the cytoplasm. It carries out the reaction tRNA(Glu) + L-glutamate + ATP = L-glutamyl-tRNA(Glu) + AMP + diphosphate. Functionally, catalyzes the attachment of glutamate to tRNA(Glu) in a two-step reaction: glutamate is first activated by ATP to form Glu-AMP and then transferred to the acceptor end of tRNA(Glu). In Metamycoplasma arthritidis (strain 158L3-1) (Mycoplasma arthritidis), this protein is Glutamate--tRNA ligase.